Here is a 354-residue protein sequence, read N- to C-terminus: Trans-L-3-hydroxyproline dehydratase (354 aa).

The active-site Proton acceptor is the cysteine 104. Substrate contacts are provided by residues 105-106 (GH), aspartate 269, and 274-275 (GS).

Belongs to the proline racemase family. Homodimer.

It carries out the reaction trans-3-hydroxy-L-proline = 1-pyrroline-2-carboxylate + H2O. Catalyzes the dehydration of trans-3-hydroxy-L-proline to delta-1-pyrroline-2-carboxylate (Pyr2C). The polypeptide is Trans-L-3-hydroxyproline dehydratase (L3hypdh) (Mus musculus (Mouse)).